The following is a 375-amino-acid chain: MPSGSGFHNIEEAGEKARKRDDWIAISNFHPGWFSVNMGTGITAILLQNLPYQFPGLHYIAVVLFILNVIIFFLFLTISITRYCLWPDKFKAMLAHPAHSMLLGTFPMGFATIINCIVFICVPVWGEWASRFAWGLWWIDAAVSVAICYFVPFMLMTKHTSSLETMTAAWLLPIVAPVVAAASGGVVADSLQNDTHALITILVCYAMWGSAVPLAMVILVIYFQRLAIHKLVPRAAIVSALLPIGPLGQGGFGLMQLGVVAKRVFPRLDFLAPIAGDIFYVMGAFIAMIMWGFGLIWLWFALASFTRGKFYFNIGWWAFTFPLGVFTTATTQMGKEFNSPFFDILGTFFSIVVTCMWVLVFALTVYKSCTKELFR.

Topologically, residues 1–25 (MPSGSGFHNIEEAGEKARKRDDWIA) are cytoplasmic. The chain crosses the membrane as a helical span at residues 26–46 (ISNFHPGWFSVNMGTGITAIL). Residues 47–59 (LQNLPYQFPGLHY) are Extracellular-facing. A helical membrane pass occupies residues 60-80 (IAVVLFILNVIIFFLFLTISI). Over 81 to 101 (TRYCLWPDKFKAMLAHPAHSM) the chain is Cytoplasmic. A helical transmembrane segment spans residues 102-122 (LLGTFPMGFATIINCIVFICV). At 123–135 (PVWGEWASRFAWG) the chain is on the extracellular side. A helical transmembrane segment spans residues 136-156 (LWWIDAAVSVAICYFVPFMLM). Residues 157–167 (TKHTSSLETMT) are Cytoplasmic-facing. Residues 168–188 (AAWLLPIVAPVVAAASGGVVA) traverse the membrane as a helical segment. At 189–200 (DSLQNDTHALIT) the chain is on the extracellular side. Asparagine 193 carries an N-linked (GlcNAc...) asparagine glycan. A helical transmembrane segment spans residues 201 to 221 (ILVCYAMWGSAVPLAMVILVI). Topologically, residues 222 to 234 (YFQRLAIHKLVPR) are cytoplasmic. Residues 235-255 (AAIVSALLPIGPLGQGGFGLM) form a helical membrane-spanning segment. At 256–277 (QLGVVAKRVFPRLDFLAPIAGD) the chain is on the extracellular side. Residues 278 to 298 (IFYVMGAFIAMIMWGFGLIWL) traverse the membrane as a helical segment. Residues 299 to 309 (WFALASFTRGK) lie on the Cytoplasmic side of the membrane. A helical transmembrane segment spans residues 310 to 330 (FYFNIGWWAFTFPLGVFTTAT). Over 331–343 (TQMGKEFNSPFFD) the chain is Extracellular. The chain crosses the membrane as a helical span at residues 344–364 (ILGTFFSIVVTCMWVLVFALT). Residues 365–375 (VYKSCTKELFR) are Cytoplasmic-facing.

Belongs to the tellurite-resistance/dicarboxylate transporter (TDT) family.

It localises to the cell membrane. Its function is as follows. Sulphite efflux pump required for the secretion of sulphite as a reducing agent. In the presence of sulphite, cystine in keratin is directly cleaved to cysteine and S-sulphocysteine, and thereby, reduced proteins become accessible to hydrolysis by a variety of secreted endo- and exoproteases. Excretion of sulphite mediated by an efflux pump also represents a detoxification pathway for dermatophytes during infection of the epidermal stratum corneum, hair and nails, which are rich in cysteine. The chain is Sulfite efflux pump SSU1 (SSU1) from Trichophyton rubrum (Athlete's foot fungus).